The sequence spans 442 residues: C4-dicarboxylate transport protein (442 aa).

8 helical membrane-spanning segments follow: residues 19–39, 55–75, 90–110, 161–181, 199–219, 232–252, 318–338, and 366–386; these read QLYFQVVVAIVAGVLLGHFEP, LVKMIIAPVIFLTIVTGIAGM, AYFLFFSTLALVVGMVVAHVV, ILQVLFVAVLFGISLAMVGDA, LVGILMKAAPLGAFGAIAFTI, WLVGSFYITSLLFVVVVLGFV, IYMTLAALFIAQATNTHLTLG, and AATLAVVPEVPVAGMALILGV.

The protein belongs to the dicarboxylate/amino acid:cation symporter (DAACS) (TC 2.A.23) family.

The protein localises to the cell inner membrane. Its function is as follows. Responsible for the transport of dicarboxylates such as succinate, fumarate, and malate from the periplasm across the membrane. The protein is C4-dicarboxylate transport protein of Delftia acidovorans (strain DSM 14801 / SPH-1).